Consider the following 318-residue polypeptide: Ethyl acetate hydrolase (318 aa).

Residues S165, D261, and H291 contribute to the active site.

It belongs to the 'GDXG' lipolytic enzyme family. Monomer.

It localises to the cytoplasm. The catalysed reaction is ethyl acetate + H2O = ethanol + acetate + H(+). Its activity is regulated as follows. Inhibited by the serine protease inhibitor phenylmethylsulfonyl fluoride, the histidine reagent diethylpyrocarbonate and two sulfhydryl reagents, mercuric chloride and naphthol AS-D chloroacetate. Not inhibited by EDTA. Esterase that catalyzes the hydrolysis of ethyl acetate. Can also use propyl acetate and the chromogenic substrates alpha-naphthyl acetate, alpha-naphthyl propionate, alpha-naphthyl caproate and 4-nitrophenyl acetate, with a preference for short-chain aliphatic esters. Highest activity is obtained in vitro with propyl acetate, followed by ethyl acetate. In vivo, could be involved in pyoverdine biosynthesis, but its specific role and its in vivo substrate have not been identified. In Pseudomonas putida (Arthrobacter siderocapsulatus), this protein is Ethyl acetate hydrolase.